Reading from the N-terminus, the 390-residue chain is 4-hydroxycoumarin synthase 1 (390 aa).

Cys-161 is a catalytic residue.

Belongs to the thiolase-like superfamily. Chalcone/stilbene synthases family. As to quaternary structure, homodimer.

The enzyme catalyses 2-hydroxybenzoyl-CoA + malonyl-CoA = 4-hydroxycoumarin + CO2 + 2 CoA. In terms of biological role, type III polyketide synthase involved preferentially in the biosynthesis of 4-hydroxycoumarin from salicoyl-CoA. Can also use benzoyl-CoA and malonyl-CoA to produce 3,5-dihydroxybiphenyl as a major product and benzoyldiacetic acid lactone as a minor side product. Can also use m-hydroxybenzoyl-CoA as substrate, producing m-hydroxybenzoyl diacetic acid lactone as a derailment product. No activity with p-hydroxybenzoyl-CoA, CoA-linked cinnamic acids or acetyl-CoA. This Sorbus aucuparia (European mountain ash) protein is 4-hydroxycoumarin synthase 1 (BIS2).